The primary structure comprises 529 residues: Biotin-dependent 3-methylcrotonyl-coenzyme A carboxylase beta1 subunit (529 aa).

Residues His16–Arg272 form the CoA carboxyltransferase N-terminal domain. The region spanning Glu275 to Gln521 is the CoA carboxyltransferase C-terminal domain.

Belongs to the AccD/PCCB family. As to quaternary structure, the biotin-dependent acyl-CoA carboxylase complex is composed of AccA1, which contains the biotin carboxylase (BC) and biotin carboxyl carrier protein (BCCP) domains, and AccD1, which contains the carboxyl transferase (CT) domain. The AccA1/AccD1 complex forms a dodecamer.

It carries out the reaction 3-methylbut-2-enoyl-CoA + N(6)-carboxybiotinyl-L-lysyl-[protein] = 3-methyl-(2E)-glutaconyl-CoA + N(6)-biotinyl-L-lysyl-[protein]. It participates in amino-acid degradation; L-leucine degradation. Its function is as follows. Component of a biotin-dependent acyl-CoA carboxylase complex. This subunit transfers the CO2 from carboxybiotin to the CoA ester substrate. When associated with the alpha1 subunit AccA1, is involved in branched amino-acid catabolism with methylcrotonyl coenzyme A as the substrate. Shows residual with propionyl-CoA and acetyl-CoA. This is Biotin-dependent 3-methylcrotonyl-coenzyme A carboxylase beta1 subunit from Mycobacterium tuberculosis (strain ATCC 25618 / H37Rv).